A 408-amino-acid chain; its full sequence is PCI domain-containing protein 2 (408 aa).

Ala2 carries the post-translational modification N-acetylalanine. Ser45 is subject to Phosphoserine. The PCI domain occupies 210–400; it reads VTYRYYVGRK…QKLVVSKQNP (191 aa).

The protein belongs to the CSN12 family. As to quaternary structure, component of the nuclear pore complex (NPC)-associated TREX-2 complex (transcription and export complex 2), composed of at least GANP, 2 copies of ENY2, PCID2, SEM1/DSS1, and either centrin CETN2 or centrin CETN3. The TREX-2 complex also associates with ALYREF/ALY and with the nucleoporin NUP153. Interacts with BRCA2. Interacts with SRCAP chromatin remodeling complex component ZNHIT1; the interaction results in inhibition of SRCAP complex activity, preventing the deposition of histone variant H2AZ1/H2A.Z to lymphoid fate regulator genes and restricting lymphoid lineage commitment.

The protein localises to the cytoplasm. The protein resides in the nucleus. Its subcellular location is the nuclear pore complex. Required for B-cell survival through the regulation of the expression of cell-cycle checkpoint MAD2L1 protein during B cell differentiation. As a component of the TREX-2 complex, involved in the export of mRNAs to the cytoplasm through the nuclear pores. Binds and stabilizes BRCA2 and is thus involved in the control of R-loop-associated DNA damage and transcription-associated genomic instability. Blocks the activity of the SRCAP chromatin remodeling complex by interacting with SRCAP complex member ZNHIT1 and inhibiting its interaction with the complex. This prevents the deposition of histone variant H2AZ1/H2A.Z at the nucleosomes of key lymphoid fate regulator genes which suppresses their expression and restricts lymphoid lineage commitment. This is PCI domain-containing protein 2 (PCID2) from Bos taurus (Bovine).